Consider the following 296-residue polypeptide: Acetyl-coenzyme A carboxylase carboxyl transferase subunit beta (296 aa).

The 270-residue stretch at 25 to 294 (VWTKCTACEQ…PFVEPELISE (270 aa)) folds into the CoA carboxyltransferase N-terminal domain. C29, C32, C48, and C51 together coordinate Zn(2+). The C4-type zinc finger occupies 29–51 (CTACEQVLYSEELKRNLYVCPKC).

Belongs to the AccD/PCCB family. As to quaternary structure, acetyl-CoA carboxylase is a heterohexamer composed of biotin carboxyl carrier protein (AccB), biotin carboxylase (AccC) and two subunits each of ACCase subunit alpha (AccA) and ACCase subunit beta (AccD). Zn(2+) is required as a cofactor.

It localises to the cytoplasm. It carries out the reaction N(6)-carboxybiotinyl-L-lysyl-[protein] + acetyl-CoA = N(6)-biotinyl-L-lysyl-[protein] + malonyl-CoA. The protein operates within lipid metabolism; malonyl-CoA biosynthesis; malonyl-CoA from acetyl-CoA: step 1/1. In terms of biological role, component of the acetyl coenzyme A carboxylase (ACC) complex. Biotin carboxylase (BC) catalyzes the carboxylation of biotin on its carrier protein (BCCP) and then the CO(2) group is transferred by the transcarboxylase to acetyl-CoA to form malonyl-CoA. This chain is Acetyl-coenzyme A carboxylase carboxyl transferase subunit beta, found in Haemophilus influenzae (strain 86-028NP).